A 534-amino-acid polypeptide reads, in one-letter code: Autophagic-related protein 16.2 (534 aa).

7 WD repeats span residues 243–281 (THDG…TDAS), 288–329 (GCLG…STFS), 330–368 (GHTD…CLKS), 371–411 (VGST…ATYS), 413–452 (ELGQ…IIHL), 459–498 (KTSC…LEKV), and 504–534 (SDSA…TLWR).

It belongs to the WD repeat tipD family. As to quaternary structure, homodimer (via N-terminus). Most likely a component of a complex at least containing atg-5, lgg-3, atg-16.1 and/or atg-16.2. Interacts (via N-terminus) with atg-16.1 (via N-terminus). Interacts (via N-terminus) with atg-5. Interacts (via WD 5-6 repeats) with lgg-2; the interaction is direct. In terms of tissue distribution, expressed in neurons, pharyngeal muscles, body wall muscle cells and intestinal cells.

The protein localises to the cytoplasm. It is found in the cell membrane. In terms of biological role, most likely a component of the atg-5-atg-12-atg-16.1/atg-16.2 complex, which is recruited to the preautophagosomal membrane and associates with lgg-2 to promote autophagosome formation. Plays a role in the recruitment of lipidated lgg-1 probably to the autophagosome membrane to promote autophagosome formation. Furthermore, association with atg-5 is required for the nucleation of lgg-1 positive autophagosomes. Although its role in autophagosome formation may be distinct to the role of atg-16.2, it functions in a partially redundant manner with atg-16.1 to regulate autophagic processes. In a daf-18/PTEN- and daf-16/FOXO-dependent manner, required for maintaining the numbers of germ stem cell progenitors in the gonad during the late phases of larval development. This chain is Autophagic-related protein 16.2, found in Caenorhabditis elegans.